Here is a 432-residue protein sequence, read N- to C-terminus: Glutamate-1-semialdehyde 2,1-aminomutase 1 (432 aa).

An N6-(pyridoxal phosphate)lysine modification is found at lysine 268.

The protein belongs to the class-III pyridoxal-phosphate-dependent aminotransferase family. HemL subfamily. Homodimer. The cofactor is pyridoxal 5'-phosphate.

The protein localises to the cytoplasm. The enzyme catalyses (S)-4-amino-5-oxopentanoate = 5-aminolevulinate. It participates in porphyrin-containing compound metabolism; protoporphyrin-IX biosynthesis; 5-aminolevulinate from L-glutamyl-tRNA(Glu): step 2/2. This Bacillus licheniformis (strain ATCC 14580 / DSM 13 / JCM 2505 / CCUG 7422 / NBRC 12200 / NCIMB 9375 / NCTC 10341 / NRRL NRS-1264 / Gibson 46) protein is Glutamate-1-semialdehyde 2,1-aminomutase 1.